Consider the following 428-residue polypeptide: tRNA modification GTPase MnmE (428 aa).

Residues Arg20, Glu76, and Arg116 each contribute to the (6S)-5-formyl-5,6,7,8-tetrahydrofolate site. Positions 212–351 constitute a TrmE-type G domain; it reads GFEVAIIGAP…LVEALQDRLL (140 aa). Asn222 lines the K(+) pocket. Residues 222–227, 241–247, and 266–269 contribute to the GTP site; these read NAGKST, SEVAGTT, and DTAG. Ser226 is a Mg(2+) binding site. Positions 241, 243, and 246 each coordinate K(+). Thr247 contacts Mg(2+). Residue Lys428 coordinates (6S)-5-formyl-5,6,7,8-tetrahydrofolate.

The protein belongs to the TRAFAC class TrmE-Era-EngA-EngB-Septin-like GTPase superfamily. TrmE GTPase family. Homodimer. Heterotetramer of two MnmE and two MnmG subunits. Requires K(+) as cofactor.

The protein localises to the cytoplasm. In terms of biological role, exhibits a very high intrinsic GTPase hydrolysis rate. Involved in the addition of a carboxymethylaminomethyl (cmnm) group at the wobble position (U34) of certain tRNAs, forming tRNA-cmnm(5)s(2)U34. The protein is tRNA modification GTPase MnmE of Cereibacter sphaeroides (strain ATCC 17025 / ATH 2.4.3) (Rhodobacter sphaeroides).